The following is a 303-amino-acid chain: S-methyl-5'-thioadenosine phosphorylase 1 (303 aa).

Residues Ser-14, 57–58 (RH), and 90–91 (SA) contribute to the phosphate site. Met-198 is a substrate binding site. Ser-199 lines the phosphate pocket. 222 to 224 (DYD) provides a ligand contact to substrate.

It belongs to the PNP/MTAP phosphorylase family. MTAP subfamily. In terms of assembly, homotrimer.

It localises to the cytoplasm. Its subcellular location is the nucleus. The catalysed reaction is S-methyl-5'-thioadenosine + phosphate = 5-(methylsulfanyl)-alpha-D-ribose 1-phosphate + adenine. It participates in amino-acid biosynthesis; L-methionine biosynthesis via salvage pathway; S-methyl-5-thio-alpha-D-ribose 1-phosphate from S-methyl-5'-thioadenosine (phosphorylase route): step 1/1. Functionally, catalyzes the reversible phosphorylation of S-methyl-5'-thioadenosine (MTA) to adenine and 5-methylthioribose-1-phosphate. Involved in the breakdown of MTA, a major by-product of polyamine biosynthesis. Responsible for the first step in the methionine salvage pathway after MTA has been generated from S-adenosylmethionine. Has broad substrate specificity with 6-aminopurine nucleosides as preferred substrates. In Puccinia graminis f. sp. tritici (strain CRL 75-36-700-3 / race SCCL) (Black stem rust fungus), this protein is S-methyl-5'-thioadenosine phosphorylase 1.